The sequence spans 115 residues: Putative HNH nuclease YajD (115 aa).

One can recognise an HNH domain in the interval 27–75 (CGRCSREFVYSNLRELTVHHIDHDHTNNPEDGSNWELLCLYCHDHEHSK).

The protein belongs to the HNH nuclease family.

In Escherichia coli O157:H7, this protein is Putative HNH nuclease YajD (yajD).